We begin with the raw amino-acid sequence, 190 residues long: RRP15-like protein (190 aa).

The segment covering 1 to 11 (MSTKNRDRLVV) has biased composition (basic and acidic residues). 2 disordered regions span residues 1-69 (MSTK…TRKE) and 119-190 (QKTM…SDED). Residues 55–66 (QRKKKKVIKKLT) show a composition bias toward basic residues. Residues 59-84 (KKVIKKLTRKEQSLKHSVKEYRIKLA) adopt a coiled-coil conformation. The span at 119–153 (QKTMSDAVKEKMTARDRKEARERFDGKNFDSDKFA) shows a compositional bias: basic and acidic residues. Over residues 167–190 (GEEEDEQMNIGDDEIDAGNYSDED) the composition is skewed to acidic residues.

This sequence belongs to the RRP15 family.

The sequence is that of RRP15-like protein from Caenorhabditis briggsae.